The primary structure comprises 115 residues: Superoxide reductase (115 aa).

Fe cation-binding residues include Glu-14, His-16, His-41, His-47, Cys-102, and His-105.

The protein belongs to the desulfoferrodoxin family. Homotetramer. The cofactor is Fe cation.

It carries out the reaction reduced [rubredoxin] + superoxide + 2 H(+) = oxidized [rubredoxin] + H2O2. In terms of biological role, uses electrons from reduced NADP, by way of rubredoxin and an oxidoreductase, to catalyze the reduction of superoxide to hydrogen peroxide. This is Superoxide reductase (sorA) from Thermococcus kodakarensis (strain ATCC BAA-918 / JCM 12380 / KOD1) (Pyrococcus kodakaraensis (strain KOD1)).